The sequence spans 249 residues: Triosephosphate isomerase (249 aa).

Substrate-binding residues include Asn-12 and Lys-14. Lys-14 is modified (N6-acetyllysine). Ser-21 is subject to Phosphoserine. 3'-nitrotyrosine is present on Tyr-68. At Ser-80 the chain carries Phosphoserine. Catalysis depends on His-96, which acts as the Electrophile. Phosphoserine is present on Ser-106. Residue Lys-142 forms a Glycyl lysine isopeptide (Lys-Gly) (interchain with G-Cter in SUMO1) linkage. Lys-149 is subject to N6-succinyllysine. Lys-156 carries the N6-acetyllysine; alternate modification. Lys-156 is modified (N6-succinyllysine; alternate). Ser-159 bears the Phosphoserine mark. Residue Glu-166 is the Proton acceptor of the active site. Thr-173 carries the phosphothreonine modification. Lys-194 bears the N6-acetyllysine; alternate mark. N6-succinyllysine; alternate is present on Lys-194. Lys-194 is subject to N6-methyllysine; alternate. At Ser-198 the chain carries Phosphoserine. Position 209 is a 3'-nitrotyrosine (Tyr-209). A Phosphoserine modification is found at Ser-212. The residue at position 214 (Thr-214) is a Phosphothreonine. Phosphoserine is present on Ser-223. Lys-238 is subject to N6-acetyllysine.

This sequence belongs to the triosephosphate isomerase family. Homodimer.

The protein localises to the cytoplasm. It catalyses the reaction D-glyceraldehyde 3-phosphate = dihydroxyacetone phosphate. It carries out the reaction dihydroxyacetone phosphate = methylglyoxal + phosphate. It participates in carbohydrate degradation; glycolysis; D-glyceraldehyde 3-phosphate from glycerone phosphate: step 1/1. The protein operates within carbohydrate biosynthesis; gluconeogenesis. Its function is as follows. Triosephosphate isomerase is an extremely efficient metabolic enzyme that catalyzes the interconversion between dihydroxyacetone phosphate (DHAP) and D-glyceraldehyde-3-phosphate (G3P) in glycolysis and gluconeogenesis. It is also responsible for the non-negligible production of methylglyoxal a reactive cytotoxic side-product that modifies and can alter proteins, DNA and lipids. This chain is Triosephosphate isomerase (TPI1), found in Homo sapiens (Human).